Consider the following 82-residue polypeptide: MTEMNQTAIRRPFHRRRKTCPFSGTNAPKIDYKDIKLLQRYISERGKIVPSRITAISQKKQRELANAIKRARFLGLLPYVIK.

Residues 1–25 are disordered; the sequence is MTEMNQTAIRRPFHRRRKTCPFSGT.

This sequence belongs to the bacterial ribosomal protein bS18 family. In terms of assembly, part of the 30S ribosomal subunit. Forms a tight heterodimer with protein bS6.

Its function is as follows. Binds as a heterodimer with protein bS6 to the central domain of the 16S rRNA, where it helps stabilize the platform of the 30S subunit. The protein is Small ribosomal subunit protein bS18 of Bartonella henselae (strain ATCC 49882 / DSM 28221 / CCUG 30454 / Houston 1) (Rochalimaea henselae).